The sequence spans 150 residues: D-aminoacyl-tRNA deacylase (150 aa).

The Gly-cisPro motif, important for rejection of L-amino acids motif lies at 138–139 (GP).

The protein belongs to the DTD family. In terms of assembly, homodimer.

It is found in the cytoplasm. The enzyme catalyses glycyl-tRNA(Ala) + H2O = tRNA(Ala) + glycine + H(+). The catalysed reaction is a D-aminoacyl-tRNA + H2O = a tRNA + a D-alpha-amino acid + H(+). An aminoacyl-tRNA editing enzyme that deacylates mischarged D-aminoacyl-tRNAs. Also deacylates mischarged glycyl-tRNA(Ala), protecting cells against glycine mischarging by AlaRS. Acts via tRNA-based rather than protein-based catalysis; rejects L-amino acids rather than detecting D-amino acids in the active site. By recycling D-aminoacyl-tRNA to D-amino acids and free tRNA molecules, this enzyme counteracts the toxicity associated with the formation of D-aminoacyl-tRNA entities in vivo and helps enforce protein L-homochirality. This Parabacteroides distasonis (strain ATCC 8503 / DSM 20701 / CIP 104284 / JCM 5825 / NCTC 11152) protein is D-aminoacyl-tRNA deacylase.